A 70-amino-acid polypeptide reads, in one-letter code: Cold shock-like protein CspJ (70 aa).

In terms of domain architecture, CSD spans 7–67 (GLVKWFNPEK…GPKGPSAVNV (61 aa)).

The protein resides in the cytoplasm. This is Cold shock-like protein CspJ (cspJ) from Salmonella typhi.